A 1400-amino-acid polypeptide reads, in one-letter code: MNQEVMNLFNPQAPAQTFDSIRISIASPEKILSWSYGEIKKPETINYRTFKPERDGLFCARIFGPIKDYECLCGKYKRMKYKGIICEKCGVEVTLSRVRRERMGHIELAAPVAHIWFLKSLPSRIGTLLDMTLKDIERVLYFENYIVTEPGLTSLKEHQLLSEEEYMIAVDEFGEDQFTALIGAEAIYELLASMELEKIAADLRVDLAETTSDLKQKKLMKRLKIVENFLESGNRPEWMIMKIVPVIPPDLRPLVPLDGGRFATSDLNDLYRRVINRNNRLKRLIELRAPGIIIRNEKRMLQEAVDALFDNGRRGRVITGANKRPLKSLSDMLKGKQGRFRQNLLGKRVDYSGRSVIVTGPELKLHQCGLPKKMALELFKPFIYARLDAKGYSSTVKQAKKLVEKERPEVWDILDEVIREHPVLLNRAPTLHRLGIQAFEPTLIEGKAIQLHPLVCTAFNADFDGDQMAVHVPLSLEAQLEARVLMMSTNNILHPANGAPIIVPSQDMVLGLYYLSIVAEKEPGEGMIFADMGELQHALENKVVTLHTKIKSRFKTVDAEGNPVSKIYDTTPGRMIMGELLPKNVNVPFDICNQEMTKKNISKMIDHVYRHCGQKETVIFCDRIMQLGFAHACRAGISFGKDDMVIPESKAKIVAETEALTTEYEQQYNDGLITQGEKYNKVVDAWGKATDKITEEMMARLKAVEFDPVTGRQKQMNSVYMMSHSGARGSVNQMRQLGGMRGLMAKPSGEIIETPIISNFKEGLTVNEYFNSTHGARKGLADTALKTANSGYLTRRLVDVAQDAIISEVDCGAEIGLTMQPIVDAGQIVASIGQRVLGRTALDPILHPVTGEVIVEAGRMIEEKDVEIIEKAGIQSIRIRSALTCETRDGVCAKCYGRDLARGTPVNQGEAVGVIAAQSIGEPGTQLTMRTFHLGGTAQVVDSSYLEASYEGTVKLRNRNVVRNSDGNLVVMGRNMAVLILDATGKERAVHRVTYGSRLFVDEGDTVKRGQRIAEWDPYTRPIMTEVEGYVEFEDLVDGLSVSETADESTGITKRVVIDWRSTPRGSDLKPAMVIKDKAGKILKLSKGGDARFLLSVESILSVEPGAHVKAGDVIARLPMESAKTKDITGGLPRVAELFEARRPKDHAIIAEIDGTVRFGRDYKNKRRIIIEPNDDTIEPVEYLIPKGKPFHLQDGDVIEKGEYILDGNPAPHDILAIKGVEALASYLVNEIQEVYRLQGVLINDKHIEVIVRQMLQKVEITESGDTGYIPGDHVDRIELEEINERLIEEGKKPGSGNPVLLGITKASLQTPSFISAASFQETTRVLTEAAVAGKMDTLQGLKENVIVGRLIPAGTGGMTNQIRRIATARDELIIDERRKTSGSAEANAMLVDMTNNAAE.

C71, C73, C86, and C89 together coordinate Zn(2+). Mg(2+) is bound by residues D462, D464, and D466. The Zn(2+) site is built by C811, C885, C892, and C895.

Belongs to the RNA polymerase beta' chain family. In terms of assembly, the RNAP catalytic core consists of 2 alpha, 1 beta, 1 beta' and 1 omega subunit. When a sigma factor is associated with the core the holoenzyme is formed, which can initiate transcription. Mg(2+) is required as a cofactor. The cofactor is Zn(2+).

The enzyme catalyses RNA(n) + a ribonucleoside 5'-triphosphate = RNA(n+1) + diphosphate. DNA-dependent RNA polymerase catalyzes the transcription of DNA into RNA using the four ribonucleoside triphosphates as substrates. This is DNA-directed RNA polymerase subunit beta' from Brucella canis (strain ATCC 23365 / NCTC 10854 / RM-666).